Reading from the N-terminus, the 324-residue chain is 4-hydroxy-3-methylbut-2-enyl diphosphate reductase (324 aa).

C13 serves as a coordination point for [4Fe-4S] cluster. (2E)-4-hydroxy-3-methylbut-2-enyl diphosphate is bound by residues H41 and H75. 2 residues coordinate dimethylallyl diphosphate: H41 and H75. Residues H41 and H75 each contribute to the isopentenyl diphosphate site. C97 is a [4Fe-4S] cluster binding site. Residue H125 coordinates (2E)-4-hydroxy-3-methylbut-2-enyl diphosphate. Residue H125 participates in dimethylallyl diphosphate binding. Position 125 (H125) interacts with isopentenyl diphosphate. E127 serves as the catalytic Proton donor. T168 contacts (2E)-4-hydroxy-3-methylbut-2-enyl diphosphate. C225 contacts [4Fe-4S] cluster. Residues S253, S254, N255, and S302 each coordinate (2E)-4-hydroxy-3-methylbut-2-enyl diphosphate. Positions 253, 254, 255, and 302 each coordinate dimethylallyl diphosphate. Positions 253, 254, 255, and 302 each coordinate isopentenyl diphosphate.

It belongs to the IspH family. [4Fe-4S] cluster serves as cofactor.

The enzyme catalyses isopentenyl diphosphate + 2 oxidized [2Fe-2S]-[ferredoxin] + H2O = (2E)-4-hydroxy-3-methylbut-2-enyl diphosphate + 2 reduced [2Fe-2S]-[ferredoxin] + 2 H(+). It carries out the reaction dimethylallyl diphosphate + 2 oxidized [2Fe-2S]-[ferredoxin] + H2O = (2E)-4-hydroxy-3-methylbut-2-enyl diphosphate + 2 reduced [2Fe-2S]-[ferredoxin] + 2 H(+). It participates in isoprenoid biosynthesis; dimethylallyl diphosphate biosynthesis; dimethylallyl diphosphate from (2E)-4-hydroxy-3-methylbutenyl diphosphate: step 1/1. It functions in the pathway isoprenoid biosynthesis; isopentenyl diphosphate biosynthesis via DXP pathway; isopentenyl diphosphate from 1-deoxy-D-xylulose 5-phosphate: step 6/6. In terms of biological role, catalyzes the conversion of 1-hydroxy-2-methyl-2-(E)-butenyl 4-diphosphate (HMBPP) into a mixture of isopentenyl diphosphate (IPP) and dimethylallyl diphosphate (DMAPP). Acts in the terminal step of the DOXP/MEP pathway for isoprenoid precursor biosynthesis. This is 4-hydroxy-3-methylbut-2-enyl diphosphate reductase from Chlorobium limicola (strain DSM 245 / NBRC 103803 / 6330).